Reading from the N-terminus, the 90-residue chain is MAQPAFLSALRSRLRSPQPQAPALPHLQPPRRGFHVELGAREKALLEEDTALKRFKSYKNSVKQVSKVGNILTGVVLFACAYEIVALANS.

Residues 1–41 constitute a mitochondrion transit peptide; it reads MAQPAFLSALRSRLRSPQPQAPALPHLQPPRRGFHVELGAR.

In terms of assembly, component of complex II composed of eight subunits in plants: four classical SDH subunits SDH1, SDH2, SDH3 and SDH4 (a flavoprotein (FP), an iron-sulfur protein (IP), and a cytochrome b composed of a large and a small subunit.), as well as four subunits unknown in mitochondria from bacteria and heterotrophic eukaryotes.

Its subcellular location is the mitochondrion inner membrane. The protein operates within carbohydrate metabolism; tricarboxylic acid cycle. The sequence is that of Succinate dehydrogenase subunit 7, mitochondrial from Oryza sativa subsp. japonica (Rice).